The sequence spans 75 residues: UPF0270 protein PFL_4336 (75 aa).

It belongs to the UPF0270 family.

In Pseudomonas fluorescens (strain ATCC BAA-477 / NRRL B-23932 / Pf-5), this protein is UPF0270 protein PFL_4336.